Reading from the N-terminus, the 652-residue chain is MAPGEKIKAKIKKNLPVTGPQAPNIKELMQWYCLNTNTHGCRRIVVSRGRLRRLLWILFTLTAVALIFWQCALLISSFYTVSVSIKVHFQKLDFPAVTICNINPYKYSAVRHLLADLEQETRAALKTLYGFSEITSRKRREAQSWSSVRKGTDPKFLNLAPLMAFEKGDTGKARDFFTGRKRKVNARIIHKASDVMHIHNSKEVVGFQLCSNDTSDCAVYTFSSGVNAIQEWYKLHYMNIMAQVSQEKKINMSYSADELLVTCFFDGVSCDARNFTLFHHPMYGNCYTFNNRQNETILSTSMGGSEFGLQVILYINEEEYNPFLVSSTGAKVIIHRQDEYPFVEDVGTEIETAMATSIGMHLTESFKLSDPYSQCTEDWSDVQITNIYNATYSLQICLHSCFQAKMVENCGCAQYSQPLPRGADYCNYQQHPNWMYCYYQLHQAFVREELGCQSVCKEACSFKEWTLTTSLAQWPSEVSEKWLLSILTWDQSQQIKKKLNKTDLAKLLIFYKDLNQRSIMENPANSIEQLLSNIGGQLGLWMSCSVVCVIEIIEVFFIDSLSIIARHQWHKAKGWWARRRAPACPEAPRAPQGRDNPSLDIDDDLPTFTSALSLPPAPGSQVPGTPPPRYNTLRLERAFSSQLTDTQTTFPH.

Over 1–54 the chain is Cytoplasmic; the sequence is MAPGEKIKAKIKKNLPVTGPQAPNIKELMQWYCLNTNTHGCRRIVVSRGRLRRL. A helical transmembrane segment spans residues 55–75; it reads LWILFTLTAVALIFWQCALLI. The Extracellular portion of the chain corresponds to 76-537; that stretch reads SSFYTVSVSI…EQLLSNIGGQ (462 aa). 8 disulfide bridges follow: Cys-100–Cys-286, Cys-210–Cys-217, Cys-263–Cys-270, Cys-375–Cys-460, Cys-397–Cys-456, Cys-401–Cys-452, Cys-410–Cys-437, and Cys-412–Cys-426. Residues 137 to 224 are gating release of inhibition by proteolysis (GRIP); protease-sensitive region that is responsible for the proteolytic activation of the channel; that stretch reads RKRREAQSWS…SDCAVYTFSS (88 aa). N-linked (GlcNAc...) asparagine glycosylation occurs at Asn-212. Asn-500 carries an N-linked (GlcNAc...) asparagine glycan. Residues 538 to 558 traverse the membrane as a helical segment; the sequence is LGLWMSCSVVCVIEIIEVFFI. Over 559–652 the chain is Cytoplasmic; sequence DSLSIIARHQ…LTDTQTTFPH (94 aa). The interval 610–631 is disordered; that stretch reads SALSLPPAPGSQVPGTPPPRYN. Residues 626–630 carry the PY motif; recruits WW domain-containing proteins and is thereby required for ubiquitination and inhibition of the channel by NEDD4 and NEDD4L motif; that stretch reads PPPRY.

The protein belongs to the amiloride-sensitive sodium channel (TC 1.A.6) family. SCNN1G subfamily. Component of the heterotrimeric epithelial sodium channel (ENaC) composed of an alpha/SCNN1A, a beta/SCNN1B and a gamma/SCNN1G subunit. An additional delta/SCNN1D subunit can replace the alpha/SCNN1A subunit to form an alternative channel with specific properties. Interacts with WWP1 (via WW domains). Interacts with WWP2 (via WW domains); inhibits the channel. Interacts with the full-length immature form of PCSK9 (pro-PCSK9); inhibits ENaC by promoting its proteasomal degradation. Interacts with BPIFA1; the interaction is indirect via SCNN1B and inhibits the proteolytic maturation of SCNN1A and SCNN1G and the activation of ENaC. In terms of processing, phosphorylated on serine and threonine residues. Aldosterone and insulin increase the basal level of phosphorylation. Post-translationally, ubiquitinated. Can be ubiquitinated at multiple sites and undergo monoubiquitination and polyubiquitination. Ubiquitination by NEDD4 or NEDD4L inhibits the ENaC channel through endocytosis, intracellular retention and degradation of its individual subunits. ENaC is activated through the proteolytic maturation of its subunits. Furin cleaves the SCNN1G subunit first, followed by cleavage by prostasin (PRSS8), which results in a stepwise increase in the open probability of the channel due to the release of an inhibitory tract. BPIFA1, which is recruited by the SCNN1B subunit, prevents the proteolytic activation of ENaC. In terms of processing, N-glycosylated. N-linked glycans are processed to complex type during ENaC complex assembly and transport to the plasma membrane.

It is found in the apical cell membrane. It carries out the reaction Na(+)(in) = Na(+)(out). Its activity is regulated as follows. Originally identified and characterized by its inhibition by the diuretic drug amiloride. Its function is as follows. This is one of the three pore-forming subunits of the heterotrimeric epithelial sodium channel (ENaC), a critical regulator of sodium balance and fluid homeostasis. ENaC operates in epithelial tissues, where it mediates the electrodiffusion of sodium ions from extracellular fluid through the apical membrane of cells, with water following osmotically. It plays a key role in maintaining sodium homeostasis through electrogenic sodium reabsorption in the kidneys. Additionally, ENaC is essential for airway surface liquid homeostasis, which is crucial for proper mucus clearance. This chain is Epithelial sodium channel subunit gamma, found in Bos taurus (Bovine).